The chain runs to 1155 residues: ATP-dependent helicase/deoxyribonuclease subunit B (1155 aa).

The UvrD-like helicase ATP-binding domain occupies 1–300 (MSLRFIVGRA…AHLEKYYFRH (300 aa)). ATP is bound at residue 8–15 (GRAGSGKS). One can recognise a UvrD-like helicase C-terminal domain in the interval 280-590 (TPVRFQKDSA…VVGTLERSRN (311 aa)). Residues Cys792, Cys1111, Cys1114, and Cys1120 each contribute to the [4Fe-4S] cluster site.

The protein belongs to the helicase family. AddB/RexB type 1 subfamily. As to quaternary structure, heterodimer of AddA and AddB. The cofactor is Mg(2+). [4Fe-4S] cluster serves as cofactor.

In terms of biological role, the heterodimer acts as both an ATP-dependent DNA helicase and an ATP-dependent, dual-direction single-stranded exonuclease. Recognizes the chi site generating a DNA molecule suitable for the initiation of homologous recombination. The AddB subunit has 5' -&gt; 3' nuclease activity but not helicase activity. This Desulforamulus reducens (strain ATCC BAA-1160 / DSM 100696 / MI-1) (Desulfotomaculum reducens) protein is ATP-dependent helicase/deoxyribonuclease subunit B.